The sequence spans 173 residues: ATP synthase subunit b (173 aa).

Residues I18–P38 traverse the membrane as a helical segment.

It belongs to the ATPase B chain family. F-type ATPases have 2 components, F(1) - the catalytic core - and F(0) - the membrane proton channel. F(1) has five subunits: alpha(3), beta(3), gamma(1), delta(1), epsilon(1). F(0) has three main subunits: a(1), b(2) and c(10-14). The alpha and beta chains form an alternating ring which encloses part of the gamma chain. F(1) is attached to F(0) by a central stalk formed by the gamma and epsilon chains, while a peripheral stalk is formed by the delta and b chains.

The protein resides in the cell membrane. F(1)F(0) ATP synthase produces ATP from ADP in the presence of a proton or sodium gradient. F-type ATPases consist of two structural domains, F(1) containing the extramembraneous catalytic core and F(0) containing the membrane proton channel, linked together by a central stalk and a peripheral stalk. During catalysis, ATP synthesis in the catalytic domain of F(1) is coupled via a rotary mechanism of the central stalk subunits to proton translocation. Functionally, component of the F(0) channel, it forms part of the peripheral stalk, linking F(1) to F(0). The chain is ATP synthase subunit b from Bifidobacterium adolescentis (strain ATCC 15703 / DSM 20083 / NCTC 11814 / E194a).